Consider the following 379-residue polypeptide: uncharacterized protein (379 aa).

Disordered regions lie at residues 1-20 (MLPQNSQVVHGVQDGPPVGP), 227-290 (VSQR…LQGH), and 331-371 (PGCA…RAGH). The segment covering 7–20 (QVVHGVQDGPPVGP) has biased composition (low complexity). Residues 249–261 (GCKDPRVRKEPGR) show a composition bias toward basic and acidic residues.

This is an uncharacterized protein from Dryophytes versicolor (chameleon treefrog).